A 517-amino-acid polypeptide reads, in one-letter code: Ladinin-1 (517 aa).

The disordered stretch occupies residues 1–401; the sequence is MAVSRKDWSA…SASMKLPDNT (401 aa). A Phosphoserine modification is found at S38. Residues 48 to 58 show a composition bias toward polar residues; that stretch reads LSQNGDRQASA. 4 positions are modified to phosphoserine: S64, S78, S121, and S123. Residues 120 to 131 show a composition bias toward polar residues; that stretch reads NSLSPVQATQKP. Composition is skewed to basic and acidic residues over residues 134–151 and 161–174; these read SKKELEIPPRRRLSREQR and LVGREPEERKKGVP. SEK repeat units follow at residues 203–205, 209–211, 215–217, 221–223, 227–229, 239–241, 257–259, and 269–271; these read SEK. The tract at residues 203-271 is 8 X SEK repeats; it reads SEKVLASEKT…IFEKALASEK (69 aa). The segment covering 219–233 has biased composition (basic and acidic residues); sequence AVSEKRNSSEKKSVL. Phosphoserine occurs at positions 347, 356, and 394. The segment covering 355–373 has biased composition (polar residues); the sequence is SSPTQRTYSSSLKRSSPRT. Omega-N-methylarginine is present on R424. Positions 481–517 are disordered; the sequence is RTQESGDQDPQEAQKASSATERTQWGQKSDSSLDAEV. Residue S485 is modified to Phosphoserine. Residues 494–517 are compositionally biased toward polar residues; the sequence is QKASSATERTQWGQKSDSSLDAEV.

The protein localises to the secreted. It is found in the extracellular space. The protein resides in the extracellular matrix. It localises to the basement membrane. Its function is as follows. Anchoring filament protein which is a component of the basement membrane zone. This chain is Ladinin-1 (LAD1), found in Homo sapiens (Human).